The chain runs to 414 residues: MPSSMSVRLFTASAAQRKKIQEGDCCVVLAGKTQGRFILIGAVARVSGYIPSYLDKDELCVVCGDKATGYHYRCITCEGCKGFFRRTIQKNLHPSYSCKYEGKCVIDKVTRNQCQECRFKKCKTVGMATDLVLDDSKRLAKRKLIEENREKRRKDEIQKSIVQRPEPTQEEWELIQVVTEAHVATNAQGSHWKQKRKFLPEDIGQAPIVNAPEGGKVDLEAFSQFTKIITPAITRVVDFAKKLPMFCELPCEDQIILLKGCCMEIMSLRAAVRYDPESETLTLNGEMAVTRGQLKNGGLGVVSDAIFDLGVSLSSFSLDDTEVALLQAVLLMSSDRPGLSSVERIEKCQEGFLLAFEHYINYRKHNIAHFWPKLLMKVTDLRMIGACHASRFLHMKVECPTELFPPLFLEVFED.

The segment at 1-59 is modulating; the sequence is MPSSMSVRLFTASAAQRKKIQEGDCCVVLAGKTQGRFILIGAVARVSGYIPSYLDKDEL. 2 consecutive NR C4-type zinc fingers follow at residues 60-80 and 98-122; these read CVVC…CEGC and CKYE…FKKC. A DNA-binding region (nuclear receptor) is located at residues 60-134; sequence CVVCGDKATG…VGMATDLVLD (75 aa). Positions 170–414 constitute an NR LBD domain; the sequence is EEWELIQVVT…PPLFLEVFED (245 aa).

This sequence belongs to the nuclear hormone receptor family. NR1 subfamily.

Its subcellular location is the nucleus. Functionally, high affinity receptor for triiodothyronine (T3). The chain is Thyroid hormone receptor beta-B (thrb-b) from Xenopus laevis (African clawed frog).